We begin with the raw amino-acid sequence, 615 residues long: Alpha-terpinene synthase TPS33PK, chloroplastic (615 aa).

The transit peptide at 1–33 directs the protein to the chloroplast; the sequence is MFCRLGVHQFSPLSLILNTTKLARASTLSSACY. The (2E)-geranyl diphosphate site is built by E334, V371, L375, L513, and S516. Mg(2+) is bound by residues V371 and L375. The DDXXD motif motif lies at 371–375; that stretch reads VYGTL. S516, M520, and D524 together coordinate Mg(2+).

It belongs to the terpene synthase family. Tpsb subfamily. Mg(2+) serves as cofactor. The cofactor is Mn(2+).

Its subcellular location is the plastid. It is found in the chloroplast. The catalysed reaction is (2E)-geranyl diphosphate = alpha-terpinene + diphosphate. It catalyses the reaction (2E)-geranyl diphosphate = gamma-terpinene + diphosphate. It participates in secondary metabolite biosynthesis; terpenoid biosynthesis. Its function is as follows. Involved in monoterpene (C10) olefins biosynthesis, constituants of cannabinoids and terpenoids-rich resins. Catalyzes mainly the conversion of (2E)-geranyl diphosphate to alpha-terpinene and gamma-terpinene. The chain is Alpha-terpinene synthase TPS33PK, chloroplastic from Cannabis sativa (Hemp).